We begin with the raw amino-acid sequence, 500 residues long: Cholesterol 24-hydroxylase (500 aa).

A helical membrane pass occupies residues 3 to 23; sequence PGLLLLGSAVLLAFGLCCTFV. Residue Cys-437 coordinates heme.

It belongs to the cytochrome P450 family. Heme serves as cofactor. As to expression, expressed in brain. The mRNA was broadly distributed with higher levels in gray matter zones and lower levels in regions rich in white matter. Not detected in fetal sample but its expression increases linearly with age.

Its subcellular location is the endoplasmic reticulum membrane. The protein localises to the microsome membrane. It localises to the postsynapse. The protein resides in the presynapse. It is found in the cell projection. Its subcellular location is the dendrite. It catalyses the reaction cholesterol + reduced [NADPH--hemoprotein reductase] + O2 = (24S)-hydroxycholesterol + oxidized [NADPH--hemoprotein reductase] + H2O + H(+). The enzyme catalyses cholestanol + reduced [NADPH--hemoprotein reductase] + O2 = (24S)-hydroxycholestanol + oxidized [NADPH--hemoprotein reductase] + H2O + H(+). The catalysed reaction is 7-dehydrocholesterol + reduced [NADPH--hemoprotein reductase] + O2 = cholesta-5,7-dien-3beta,24S-diol + oxidized [NADPH--hemoprotein reductase] + H2O + H(+). It carries out the reaction 7-dehydrocholesterol + reduced [NADPH--hemoprotein reductase] + O2 = cholesta-5,7-dien-3beta,25-diol + oxidized [NADPH--hemoprotein reductase] + H2O + H(+). It catalyses the reaction desmosterol + reduced [NADPH--hemoprotein reductase] + O2 = (24Z),26-hydroxydesmosterol + oxidized [NADPH--hemoprotein reductase] + H2O + H(+). The enzyme catalyses desmosterol + reduced [NADPH--hemoprotein reductase] + O2 = (24S)-25-epoxycholesterol + oxidized [NADPH--hemoprotein reductase] + H2O + H(+). The catalysed reaction is 4beta-hydroxycholesterol + reduced [NADPH--hemoprotein reductase] + O2 = 4beta,24S-dihydroxycholesterol + oxidized [NADPH--hemoprotein reductase] + H2O + H(+). It carries out the reaction (24S)-hydroxycholesterol + reduced [NADPH--hemoprotein reductase] + O2 = (24S,25R)-24,26-dihydroxycholesterol + oxidized [NADPH--hemoprotein reductase] + H2O + H(+). It catalyses the reaction (24S)-hydroxycholesterol + reduced [NADPH--hemoprotein reductase] + O2 = 24S,25-dihydroxycholesterol + oxidized [NADPH--hemoprotein reductase] + H2O + H(+). The enzyme catalyses 7alpha-hydroxycholesterol + reduced [NADPH--hemoprotein reductase] + O2 = (24S)-7alpha-dihydroxycholesterol + oxidized [NADPH--hemoprotein reductase] + H2O + H(+). The catalysed reaction is progesterone + reduced [NADPH--hemoprotein reductase] + O2 = 17alpha-hydroxyprogesterone + oxidized [NADPH--hemoprotein reductase] + H2O + H(+). It carries out the reaction testosterone + reduced [NADPH--hemoprotein reductase] + O2 = 16beta,17beta-dihydroxyandrost-4-en-3-one + oxidized [NADPH--hemoprotein reductase] + H2O + H(+). It catalyses the reaction testosterone + reduced [NADPH--hemoprotein reductase] + O2 = 2-hydroxytestosterone + oxidized [NADPH--hemoprotein reductase] + H2O + H(+). The enzyme catalyses testosterone + reduced [NADPH--hemoprotein reductase] + O2 = 6beta,17beta-dihydroxyandrost-4-en-3-one + oxidized [NADPH--hemoprotein reductase] + H2O + H(+). It functions in the pathway steroid metabolism; cholesterol degradation. Its pathway is lipid metabolism; C21-steroid hormone metabolism. P450 monooxygenase that plays a major role in cholesterol homeostasis in the brain. Primarily catalyzes the hydroxylation (with S stereochemistry) at C-24 of cholesterol side chain, triggering cholesterol diffusion out of neurons and its further degradation. By promoting constant cholesterol elimination in neurons, may activate the mevalonate pathway and coordinate the synthesis of new cholesterol and nonsterol isoprenoids involved in synaptic activity and learning. Further hydroxylates cholesterol derivatives and hormone steroids on both the ring and side chain of these molecules, converting them into active oxysterols involved in lipid signaling and biosynthesis. Acts as an epoxidase converting cholesta-5,24-dien-3beta-ol/desmosterol into (24S),25-epoxycholesterol, an abundant lipid ligand of nuclear NR1H2 and NR1H3 receptors shown to promote neurogenesis in developing brain. May also catalyze the oxidative metabolism of xenobiotics, such as clotrimazole. This chain is Cholesterol 24-hydroxylase, found in Homo sapiens (Human).